The following is a 478-amino-acid chain: Alpha-1,3-mannosyl-glycoprotein 4-beta-N-acetylglucosaminyltransferase C (478 aa).

Residues 1–25 are Cytoplasmic-facing; it reads MLKFYQMKYIFQILDKMRCLRKRST. A helical; Signal-anchor for type II membrane protein membrane pass occupies residues 26 to 43; the sequence is VSFLGVLVVFLLFMNLYI. Over 44-478 the chain is Lumenal; the sequence is EDSYVLEGDK…IIRSISIWTS (435 aa). 2 N-linked (GlcNAc...) asparagine glycosylation sites follow: Asn-84 and Asn-215.

Belongs to the glycosyltransferase 54 family. A divalent metal cation serves as cofactor.

The protein resides in the golgi apparatus membrane. The enzyme catalyses N(4)-{beta-D-GlcNAc-(1-&gt;2)-alpha-D-Man-(1-&gt;3)-[beta-D-GlcNAc-(1-&gt;2)-alpha-D-Man-(1-&gt;6)]-beta-D-Man-(1-&gt;4)-beta-D-GlcNAc-(1-&gt;4)-beta-D-GlcNAc}-L-asparaginyl-[protein] + UDP-N-acetyl-alpha-D-glucosamine = N(4)-{beta-D-GlcNAc-(1-&gt;2)-[beta-D-GlcNAc-(1-&gt;4)]-alpha-D-Man-(1-&gt;3)-[beta-D-GlcNAc-(1-&gt;2)-alpha-D-Man-(1-&gt;6)]-beta-D-Man-(1-&gt;4)-beta-D-GlcNAc-(1-&gt;4)-beta-D-GlcNAc}-L-asparaginyl-[protein] + UDP + H(+). It functions in the pathway protein modification; protein glycosylation. In terms of biological role, glycosyltransferase that participates in the transfer of N-acetylglucosamine (GlcNAc) to the core mannose residues of N-linked glycans. Catalyzes the formation of the GlcNAcbeta1-4 branch on the GlcNAcbeta1-2Manalpha1-3 arm of the core structure of N-linked glycans. Essential for the production of tri- and tetra-antennary N-linked sugar chains. Does not catalyze the transfer of GlcNAc to the Manalpha1-6 arm to form GlcNAcBeta1-4Manalpha1-6 linkage ('GnT-VI' activity). This chain is Alpha-1,3-mannosyl-glycoprotein 4-beta-N-acetylglucosaminyltransferase C (Mgat4c), found in Mus musculus (Mouse).